Consider the following 231-residue polypeptide: Octanoyl-[acyl-carrier-protein]:protein N-octanoyltransferase LIPT2, mitochondrial (231 aa).

The N-terminal 31 residues, Met1–Gln31, are a transit peptide targeting the mitochondrion. Positions Gly41–Leu224 constitute a BPL/LPL catalytic domain. Residues Arg85–His92, Ala154–Gly156, and Gly167–Ala169 each bind substrate. The active-site Acyl-thioester intermediate is Cys185.

This sequence belongs to the LipB family.

It is found in the mitochondrion. It carries out the reaction octanoyl-[ACP] + L-lysyl-[protein] = N(6)-octanoyl-L-lysyl-[protein] + holo-[ACP] + H(+). Its pathway is protein modification; protein lipoylation via endogenous pathway; protein N(6)-(lipoyl)lysine from octanoyl-[acyl-carrier-protein]: step 1/2. Catalyzes the transfer of endogenously produced octanoic acid from octanoyl-acyl-carrier-protein (octanoyl-ACP) onto the lipoyl domains of lipoate-dependent enzymes such as the protein H of the glycine cleavage system (GCSH). Lipoyl-ACP can also act as a substrate although octanoyl-ACP is likely to be the physiological substrate. The protein is Octanoyl-[acyl-carrier-protein]:protein N-octanoyltransferase LIPT2, mitochondrial of Homo sapiens (Human).